Reading from the N-terminus, the 430-residue chain is MALLHSGRVLSGMAAAFHPGLAAAASARASSWWTHVEMGPPDPILGVTEAFKRDTNSKKMNLGVGAYRDDNGKPYVLPSVRKAEAQIAGKNLDKEYLPIGGLADFCKASAELALGENSEVLKSGRFVTVQTISGTGALRVGASFLQRFFKFSRDVFLPKPSWGNHTPIFRDAGMQLQGYRYYDPKTCGFDFSGALEDISKIPEQSVLLLHACAHNPTGVDPRPEQWKEMAAVVKKKNLFAFFDMAYQGFASGDGDKDAWAVRHFIEQGINVCLCQSYAKNMGLYGERVGAFTVVCKDAEEAKRVESQLKILIRPLYSNPPLNGARIAATILTSPDLRKQWLQEVKGMADRIISMRTQLVSNLKKEGSSHNWQHITDQIGMFCFTGLKPEQVERLTKEFSVYMTKDGRISVAGVTSGNVGYLAHAIHQVTK.

The transit peptide at 1 to 29 directs the protein to the mitochondrion; that stretch reads MALLHSGRVLSGMAAAFHPGLAAAASARA. Residue Thr-48 is modified to Phosphothreonine. An N6-acetyllysine modification is found at Lys-59. Gly-65 serves as a coordination point for substrate. Position 73 is an N6-acetyllysine; alternate (Lys-73). Position 73 is an N6-succinyllysine; alternate (Lys-73). Lys-82 is subject to N6-acetyllysine. The residue at position 90 (Lys-90) is an N6-acetyllysine; alternate. At Lys-90 the chain carries N6-succinyllysine; alternate. A 3'-nitrotyrosine; alternate modification is found at Tyr-96. A Phosphotyrosine; alternate modification is found at Tyr-96. Residues Lys-107 and Lys-122 each carry the N6-acetyllysine; alternate modification. N6-succinyllysine; alternate is present on residues Lys-107 and Lys-122. Ser-143 carries the post-translational modification Phosphoserine. Residue Lys-159 is modified to N6-acetyllysine; alternate. Lys-159 is subject to N6-succinyllysine; alternate. Trp-162 is a binding site for substrate. Position 185 is an N6-acetyllysine; alternate (Lys-185). Position 185 is an N6-succinyllysine; alternate (Lys-185). Substrate is bound at residue Asn-215. N6-succinyllysine is present on Lys-227. Lys-234 carries the post-translational modification N6-acetyllysine. An N6-acetyllysine; alternate mark is found at Lys-279 and Lys-296. Lys-279 carries the N6-(pyridoxal phosphate)lysine; alternate modification. The residue at position 296 (Lys-296) is an N6-succinyllysine; alternate. N6-acetyllysine is present on Lys-302. Lys-309 is subject to N6-acetyllysine; alternate. Residue Lys-309 is modified to N6-succinyllysine; alternate. Asymmetric dimethylarginine is present on Arg-313. Lys-338 is modified (N6-acetyllysine; alternate). An N6-succinyllysine; alternate modification is found at Lys-338. Lys-345 is modified (N6-acetyllysine). Lys-363 bears the N6-acetyllysine; alternate mark. Lys-363 bears the N6-succinyllysine; alternate mark. Residues Lys-364 and Lys-387 each carry the N6-acetyllysine modification. Residues Lys-396 and Lys-404 each carry the N6-acetyllysine; alternate modification. An N6-succinyllysine; alternate mark is found at Lys-396 and Lys-404. Arg-407 provides a ligand contact to substrate.

Belongs to the class-I pyridoxal-phosphate-dependent aminotransferase family. Homodimer. It depends on pyridoxal 5'-phosphate as a cofactor. As to expression, expressed in all tissues tested: liver, pancreas, kidney, heart, spleen, arterioles, and lymphocytes.

The protein localises to the mitochondrion matrix. It is found in the cell membrane. It carries out the reaction L-aspartate + 2-oxoglutarate = oxaloacetate + L-glutamate. It catalyses the reaction L-kynurenine + 2-oxoglutarate = kynurenate + L-glutamate + H2O. Functionally, catalyzes the irreversible transamination of the L-tryptophan metabolite L-kynurenine to form kynurenic acid (KA). As a member of the malate-aspartate shuttle, it has a key role in the intracellular NAD(H) redox balance. Is important for metabolite exchange between mitochondria and cytosol, and for amino acid metabolism. Facilitates cellular uptake of long-chain free fatty acids. This Rattus norvegicus (Rat) protein is Aspartate aminotransferase, mitochondrial (Got2).